The primary structure comprises 526 residues: Type 2 glycosyltransferase (526 aa).

A helical membrane pass occupies residues proline 25 to phenylalanine 45. Residues asparagine 298 and asparagine 317 are each glycosylated (N-linked (GlcNAc...) asparagine). Transmembrane regions (helical) follow at residues phenylalanine 340–tryptophan 360, tryptophan 375–isoleucine 395, and phenylalanine 403–isoleucine 423. N-linked (GlcNAc...) asparagine glycosylation is found at asparagine 426 and asparagine 517.

It belongs to the GT2 glycosyltransferase family.

The protein resides in the cell membrane. It localises to the secreted. It is found in the cell wall. Functionally, glycosyltransferase involved in the maintenance of the outermost surface of the fungal cell wall. Likely functions in the synthesis of a currently unknown, potentially minor but widespread, extracellular or outer cell wall polysaccharide which plays a key role in facilitating many interactions between plants and fungi by enabling hyphal growth on solid matrices. The polypeptide is Type 2 glycosyltransferase (Gibberella zeae (strain ATCC MYA-4620 / CBS 123657 / FGSC 9075 / NRRL 31084 / PH-1) (Wheat head blight fungus)).